Consider the following 502-residue polypeptide: Cardiolipin synthase (502 aa).

3 helical membrane passes run 7 to 27 (VAIL…YWGG), 29 to 49 (LLGI…FVIS), and 59 to 79 (IAWL…YLLF). PLD phosphodiesterase domains are found at residues 237–264 (INFR…GDEY) and 415–442 (EKGF…DMRS). Catalysis depends on residues H242, K244, D249, H420, K422, and D427.

It belongs to the phospholipase D family. Cardiolipin synthase subfamily.

Its subcellular location is the cell membrane. The enzyme catalyses 2 a 1,2-diacyl-sn-glycero-3-phospho-(1'-sn-glycerol) = a cardiolipin + glycerol. Catalyzes the reversible phosphatidyl group transfer from one phosphatidylglycerol molecule to another to form cardiolipin (CL) (diphosphatidylglycerol) and glycerol. This is Cardiolipin synthase (cls) from Geobacillus thermodenitrificans (strain NG80-2).